The sequence spans 330 residues: Aspartate--ammonia ligase (330 aa).

It belongs to the class-II aminoacyl-tRNA synthetase family. AsnA subfamily. As to quaternary structure, homodimer.

The protein localises to the cytoplasm. It carries out the reaction L-aspartate + NH4(+) + ATP = L-asparagine + AMP + diphosphate + H(+). The protein operates within amino-acid biosynthesis; L-asparagine biosynthesis; L-asparagine from L-aspartate (ammonia route): step 1/1. This is Aspartate--ammonia ligase from Salmonella typhimurium (strain LT2 / SGSC1412 / ATCC 700720).